Consider the following 160-residue polypeptide: Large ribosomal subunit protein eL21B (160 aa).

K32 is covalently cross-linked (Glycyl lysine isopeptide (Lys-Gly) (interchain with G-Cter in ubiquitin)).

This sequence belongs to the eukaryotic ribosomal protein eL21 family. As to quaternary structure, component of the large ribosomal subunit (LSU). Mature yeast ribosomes consist of a small (40S) and a large (60S) subunit. The 40S small subunit contains 1 molecule of ribosomal RNA (18S rRNA) and 33 different proteins (encoded by 57 genes). The large 60S subunit contains 3 rRNA molecules (25S, 5.8S and 5S rRNA) and 46 different proteins (encoded by 81 genes).

The protein localises to the cytoplasm. Component of the ribosome, a large ribonucleoprotein complex responsible for the synthesis of proteins in the cell. The small ribosomal subunit (SSU) binds messenger RNAs (mRNAs) and translates the encoded message by selecting cognate aminoacyl-transfer RNA (tRNA) molecules. The large subunit (LSU) contains the ribosomal catalytic site termed the peptidyl transferase center (PTC), which catalyzes the formation of peptide bonds, thereby polymerizing the amino acids delivered by tRNAs into a polypeptide chain. The nascent polypeptides leave the ribosome through a tunnel in the LSU and interact with protein factors that function in enzymatic processing, targeting, and the membrane insertion of nascent chains at the exit of the ribosomal tunnel. The chain is Large ribosomal subunit protein eL21B from Saccharomyces cerevisiae (strain ATCC 204508 / S288c) (Baker's yeast).